The chain runs to 56 residues: Large ribosomal subunit protein eL20 (56 aa).

A disordered region spans residues 1-24 (MSTYTVRGSFPARDGPQQFEKEVE).

The protein belongs to the eukaryotic ribosomal protein eL20 family. Part of the 50S ribosomal subunit. Binds 23S rRNA.

The sequence is that of Large ribosomal subunit protein eL20 from Haloarcula marismortui (strain ATCC 43049 / DSM 3752 / JCM 8966 / VKM B-1809) (Halobacterium marismortui).